Consider the following 366-residue polypeptide: Mitochondrial carrier protein MTM1 (366 aa).

3 Solcar repeats span residues 14–149 (ERML…IRDV), 156–250 (YPTL…CKER), and 266–359 (VHFI…SKKV). The next 6 membrane-spanning stretches (helical) occupy residues 17–36 (LSAGAGSVLTSLILTPMDVV), 126–146 (SLTLLMAIPANMVYFSGYEYI), 162–182 (LFCGAIARVFAATSIAPLELV), 229–249 (TLWRDVPFSAIYWSSYELCKE), 268–286 (FINSFASGCISGMIAAICT), and 331–352 (LYTGLAARVIKIRPSCAIMISS).

This sequence belongs to the mitochondrial carrier (TC 2.A.29) family.

The protein localises to the mitochondrion inner membrane. Involved in the mitochondrial activation of SOD2 by specifically facilitating insertion of the essential manganese cofactor. Has the ability to activate iron regulon in an iron-dependent manner. Responds to calorie restriction (CR) strength. The protein is Mitochondrial carrier protein MTM1 (MTM1) of Saccharomyces cerevisiae (strain ATCC 204508 / S288c) (Baker's yeast).